The primary structure comprises 139 residues: Small ribosomal subunit protein uS12 (139 aa).

A 3-methylthioaspartic acid modification is found at aspartate 102.

This sequence belongs to the universal ribosomal protein uS12 family. As to quaternary structure, part of the 30S ribosomal subunit. Contacts proteins S8 and S17. May interact with IF1 in the 30S initiation complex.

With S4 and S5 plays an important role in translational accuracy. Functionally, interacts with and stabilizes bases of the 16S rRNA that are involved in tRNA selection in the A site and with the mRNA backbone. Located at the interface of the 30S and 50S subunits, it traverses the body of the 30S subunit contacting proteins on the other side and probably holding the rRNA structure together. The combined cluster of proteins S8, S12 and S17 appears to hold together the shoulder and platform of the 30S subunit. The sequence is that of Small ribosomal subunit protein uS12 from Bacillus pumilus (strain SAFR-032).